Reading from the N-terminus, the 502-residue chain is Chromosomal replication initiator protein DnaA (502 aa).

A domain I, interacts with DnaA modulators region spans residues 1–112 (MADDLSLGFT…PSTDHIDDNS (112 aa)). The segment at 113-161 (SSADVLLTDDCGTDTDENYGEPLTGEYQGLPTYFTERPHHTESTVTGGT) is domain II. The tract at residues 162–378 (SLNRRYTFET…GALIRVTAFA (217 aa)) is domain III, AAA+ region. ATP contacts are provided by Gly-206, Gly-208, Lys-209, and Thr-210. Residues 379–502 (SLNKTAIDKA…TTRIRQRSKR (124 aa)) form a domain IV, binds dsDNA region.

Belongs to the DnaA family. Oligomerizes as a right-handed, spiral filament on DNA at oriC.

Its subcellular location is the cytoplasm. Functionally, plays an essential role in the initiation and regulation of chromosomal replication. ATP-DnaA binds to the origin of replication (oriC) to initiate formation of the DNA replication initiation complex once per cell cycle. Binds the DnaA box (a 9 base pair repeat at the origin) and separates the double-stranded (ds)DNA. Forms a right-handed helical filament on oriC DNA; dsDNA binds to the exterior of the filament while single-stranded (ss)DNA is stabiized in the filament's interior. The ATP-DnaA-oriC complex binds and stabilizes one strand of the AT-rich DNA unwinding element (DUE), permitting loading of DNA polymerase. After initiation quickly degrades to an ADP-DnaA complex that is not apt for DNA replication. Binds acidic phospholipids. The sequence is that of Chromosomal replication initiator protein DnaA from Mycobacterium leprae (strain TN).